A 695-amino-acid polypeptide reads, in one-letter code: Tripartite terminase subunit 1 (695 aa).

A C3H1-type zinc finger spans residues 182–210 (CLECLQEVCLTPNQGTSLQAMLPDTACSH). Position 621-628 (621-628 (YNRTWERE)) interacts with ATP.

This sequence belongs to the herpesviridae TRM1 protein family. In terms of assembly, associates with TRM2 and TRM3 to form the tripartite terminase complex. Interacts with portal protein.

The protein localises to the host nucleus. Its function is as follows. Component of the molecular motor that translocates viral genomic DNA in empty capsid during DNA packaging. Forms a tripartite terminase complex together with TRM2 and TRM3 in the host cytoplasm. Once the complex reaches the host nucleus, it interacts with the capsid portal vertex. This portal forms a ring in which genomic DNA is translocated into the capsid. TRM1 carries an endonuclease activity that plays an important role for the cleavage of concatemeric viral DNA into unit length genomes. The protein is Tripartite terminase subunit 1 of Homo sapiens (Human).